The primary structure comprises 363 residues: Chorismate synthase (363 aa).

NADP(+) contacts are provided by R48 and R54. FMN contacts are provided by residues 125-127, 238-239, G278, 293-297, and R319; these read RSS, NA, and KPTSS.

This sequence belongs to the chorismate synthase family. As to quaternary structure, homotetramer. The cofactor is FMNH2.

It carries out the reaction 5-O-(1-carboxyvinyl)-3-phosphoshikimate = chorismate + phosphate. It functions in the pathway metabolic intermediate biosynthesis; chorismate biosynthesis; chorismate from D-erythrose 4-phosphate and phosphoenolpyruvate: step 7/7. Catalyzes the anti-1,4-elimination of the C-3 phosphate and the C-6 proR hydrogen from 5-enolpyruvylshikimate-3-phosphate (EPSP) to yield chorismate, which is the branch point compound that serves as the starting substrate for the three terminal pathways of aromatic amino acid biosynthesis. This reaction introduces a second double bond into the aromatic ring system. In Alcanivorax borkumensis (strain ATCC 700651 / DSM 11573 / NCIMB 13689 / SK2), this protein is Chorismate synthase.